A 1024-amino-acid polypeptide reads, in one-letter code: Multidrug resistance protein MdtC (1024 aa).

Helical transmembrane passes span 3–23 (FLSL…ALVL), 333–353 (EVEQ…FAFL), 360–380 (LIPA…MYLC), 387–407 (LSLM…IVVL), 431–451 (VGFT…PLLM), 463–483 (FAIT…TLTP), 528–548 (WALL…ISMP), 853–873 (LWLI…LYES), 875–895 (VHPL…LLAL), 897–917 (LFNT…IGIV), 953–973 (PIIM…LSSG), and 984–1004 (ITIV…TPVV).

This sequence belongs to the resistance-nodulation-cell division (RND) (TC 2.A.6) family. MdtC subfamily. As to quaternary structure, part of a tripartite efflux system composed of MdtA, MdtB and MdtC. MdtC forms a heteromultimer with MdtB.

It is found in the cell inner membrane. This is Multidrug resistance protein MdtC from Erwinia amylovora (strain ATCC 49946 / CCPPB 0273 / Ea273 / 27-3).